The following is a 364-amino-acid chain: Protein spindle-F (364 aa).

The segment at 1-26 (MEASAAKITPMASSMSASGSTNSPSS) is disordered. Residues 9–26 (TPMASSMSASGSTNSPSS) show a composition bias toward low complexity. Residues 32–114 (ALQVALQTIK…GMVSNENRRL (83 aa)) adopt a coiled-coil conformation. S53 is subject to Phosphoserine. The segment at 56–75 (EENQQLREASSRSEGAPRAN) is disordered. Phosphoserine occurs at positions 85, 172, and 202. A coiled-coil region spans residues 210–243 (AKRCLDGLQELRREAMKQQQELRSVMTLLENRIA). A phosphoserine mark is found at S264 and S270. A UBZ1-type zinc finger spans residues 310–336 (EKTCPMCGKQYSSQVSFNAFREHVEMH). Zn(2+)-binding residues include C313 and C316. At S325 the chain carries Phosphoserine. 2 residues coordinate Zn(2+): H332 and H336. S349 carries the post-translational modification Phosphoserine.

Forms homooligomers. Interacts with the dynein light chain ctp. Interacts (via C-terminus) with IKKepsilon; this leads to phosphorylation of spn-F. Forms ternary complexes with ctp and IKKepsilon; this is required for spn-F redistribution from puncta in larval neurons and for dendrite pruning. Interacts with ctp and IKKepsilon through distinct regions. Interacts (via C-terminus) with jvl. Post-translationally, phosphorylated by IKKepsilon. Phosphorylation is required for spn-F neuronal distribution and dendrite pruning and reduces spn-F homooligomerization. It does not lead to spn-F degradation. As to expression, in pupal bristles, localizes to the bristle tip throughout the elongation period (at protein level).

The protein resides in the cytoplasm. Its subcellular location is the cytoskeleton. It localises to the cell projection. The protein localises to the axon. It is found in the dendrite. The protein resides in the perikaryon. Plays a role in oocyte axis determination and microtubule organization during oogenesis. Also required for polarized organization of the bristle. Required, with jvl, for activation of the kinase IKKepsilon in the germ line. Also required for localization of IKKepsilon to the distal tip of elongating bristles by acting as an adapter linking IKKepsilon and cytoplasmic dynein. Involved in dendrite pruning in larval sensory neurons during metamorphosis. The protein is Protein spindle-F of Drosophila melanogaster (Fruit fly).